Here is a 378-residue protein sequence, read N- to C-terminus: MDGREAMAFPGSHSQFYLQRGVFTNLTPSQVASGLHAPPPPPGMRPMSNPNIHHPQASNPGPPFSMAEHRHSDFGHSIHMGMASPAAVQPTLQLPPPPSEQPMVKKKRGRPRKYVPDGQVSLGLSPMPCVSKKSKDSSSMSDPNAPKRARGRPPGTGRKQRLANLGEWMNTSAGLAFAPHVISVGSGEDIVSKVLSFSQKRPRALCIMSGTGTVSSVTLREPASTTPSLTFEGRFEILSLGGSYLVNEEGGSKSRTGGLSVSLSGPEGHVIGGGIGMLIAASLVQVVACSFVYGASAKSNNNNNKTIKQEIKPKQEPTNSEMETTPGSAPEAAASTGQHTPQNFPAQGMSGWPVSGSGSGRSLDSSRNPLTDIDLTRG.

Disordered regions lie at residues 30–70, 88–160, and 302–378; these read QVAS…AEHR, VQPT…GRKQ, and NNNK…LTRG. A compositionally biased stretch (basic residues) spans 104-113; sequence VKKKRGRPRK. A Bipartite nuclear localization signal motif is present at residues 105-113; sequence KKKRGRPRK. DNA-binding regions (a.T hook) lie at residues 105–117 and 147–159; these read KKKR…YVPD and KRAR…TGRK. Residues 171–314 enclose the PPC domain; sequence TSAGLAFAPH…KTIKQEIKPK (144 aa). 2 stretches are compositionally biased toward polar residues: residues 316–327 and 335–345; these read EPTNSEMETTPG and STGQHTPQNFP.

As to quaternary structure, interacts with AHL29.

The protein resides in the nucleus. Its function is as follows. Transcription factor that specifically binds AT-rich DNA sequences related to the nuclear matrix attachment regions (MARs). The sequence is that of AT-hook motif nuclear-localized protein 5 from Arabidopsis thaliana (Mouse-ear cress).